The sequence spans 269 residues: Mitochondrial scaffolding protein 1 (269 aa).

Residues 49–121 enclose the PDZ domain; it reads VVEIEKTSKG…HDEAVEVFRS (73 aa). The interval 143–185 is disordered; it reads RTQTPTASVSITPQVTPQTRSTQNNTDTPKSMSHSESKSRLTS. The span at 145-174 shows a compositional bias: polar residues; sequence QTPTASVSITPQVTPQTRSTQNNTDTPKSM. The chain crosses the membrane as a helical span at residues 240 to 262; it reads WLTEALYVSIGLGALTISGYLAY.

It is found in the membrane. In terms of biological role, plays a role in the regulation of lifespan in a partially daf-16-mediated manner, and may be involved in regulating the levels of reactive oxygen species production in response to heat stress. In Caenorhabditis elegans, this protein is Mitochondrial scaffolding protein 1.